Reading from the N-terminus, the 421-residue chain is Nucleotide exchange factor SIL1 (421 aa).

Positions methionine 1–serine 19 are cleaved as a signal peptide. 6 N-linked (GlcNAc...) asparagine glycosylation sites follow: asparagine 105, asparagine 181, asparagine 215, asparagine 233, asparagine 315, and asparagine 333. The Prevents secretion from ER motif lies at arginine 418–leucine 421.

It belongs to the SIL1 family. As to quaternary structure, interacts with KAR2. N-glycosylated.

The protein localises to the endoplasmic reticulum lumen. Required for protein translocation and folding in the endoplasmic reticulum (ER). Functions as a nucleotide exchange factor for the ER lumenal chaperone KAR2. This Saccharomyces cerevisiae (strain ATCC 204508 / S288c) (Baker's yeast) protein is Nucleotide exchange factor SIL1 (SIL1).